A 449-amino-acid polypeptide reads, in one-letter code: N-succinylarginine dihydrolase (449 aa).

Substrate-binding positions include 19-28 (GGLSYGNVAS), Asn-110, and 137-138 (HR). The disordered stretch occupies residues 23–43 (YGNVASQSNSQQASNPREAAR). Positions 27–37 (ASQSNSQQASN) are enriched in low complexity. Residue Glu-174 is part of the active site. Arg-214 lines the substrate pocket. The active site involves His-250. Asp-252 and Asn-365 together coordinate substrate. Catalysis depends on Cys-371, which acts as the Nucleophile.

The protein belongs to the succinylarginine dihydrolase family. Homodimer.

The catalysed reaction is N(2)-succinyl-L-arginine + 2 H2O + 2 H(+) = N(2)-succinyl-L-ornithine + 2 NH4(+) + CO2. It participates in amino-acid degradation; L-arginine degradation via AST pathway; L-glutamate and succinate from L-arginine: step 2/5. Catalyzes the hydrolysis of N(2)-succinylarginine into N(2)-succinylornithine, ammonia and CO(2). The sequence is that of N-succinylarginine dihydrolase from Pseudomonas putida (strain ATCC 700007 / DSM 6899 / JCM 31910 / BCRC 17059 / LMG 24140 / F1).